We begin with the raw amino-acid sequence, 528 residues long: ATP synthase F(1) complex catalytic subunit beta, mitochondrial (528 aa).

Residues 1–46 (MLGLVGRVVAASASGALRGLSPSAPLPQAQLLLRAAPAALQPARDY) constitute a mitochondrion transit peptide. Ser106 carries an O-linked (GlcNAc) serine glycan. Residues Lys124 and Lys161 each carry the N6-acetyllysine; alternate modification. N6-succinyllysine; alternate occurs at positions 124 and 161. Lys198 carries the N6-acetyllysine modification. ADP-binding residues include Gly209, Val210, Gly211, Lys212, Thr213, and Val214. Gly209 provides a ligand contact to ATP. Positions 209, 210, 211, 212, and 213 each coordinate phosphate. Positions 211, 212, 213, and 214 each coordinate ATP. Residue Thr213 coordinates Mg(2+). Glu238 lines the Mg(2+) pocket. Arg239 serves as a coordination point for ATP. An N6-acetyllysine; alternate mark is found at Lys259 and Lys264. An N6-succinyllysine; alternate mark is found at Lys259 and Lys264. At Thr312 the chain carries Phosphothreonine. Ser415 is modified (phosphoserine). An N6-acetyllysine modification is found at Lys426. Phosphoserine is present on Ser433. 2 positions are modified to N6-acetyllysine: Lys480 and Lys485. Lys522 carries the N6-acetyllysine; alternate modification. Lys522 carries the N6-succinyllysine; alternate modification.

This sequence belongs to the ATPase alpha/beta chains family. As to quaternary structure, homotrimer. Component of the ATP synthase complex composed at least of ATP5F1A/subunit alpha, ATP5F1B/subunit beta, ATP5MC1/subunit c (homooctomer), MT-ATP6/subunit a, MT-ATP8/subunit 8, ATP5ME/subunit e, ATP5MF/subunit f, ATP5MG/subunit g, ATP5MK/subunit k, ATP5MJ/subunit j, ATP5F1C/subunit gamma, ATP5F1D/subunit delta, ATP5F1E/subunit epsilon, ATP5PF/subunit F6, ATP5PB/subunit b, ATP5PD/subunit d, ATP5PO/subunit OSCP. ATP synthase complex consists of a soluble F(1) head domain (subunits alpha(3) and beta(3)) - the catalytic core - and a membrane F(0) domain - the membrane proton channel (subunits c, a, 8, e, f, g, k and j). These two domains are linked by a central stalk (subunits gamma, delta, and epsilon) rotating inside the F1 region and a stationary peripheral stalk (subunits F6, b, d, and OSCP). Interacts with PPIF. Interacts with BCL2L1 isoform BCL-X(L); the interaction mediates the association of BCL2L1 isoform BCL-X(L) with the mitochondrial membrane F(1)F(0) ATP synthase and enhances neurons metabolic efficiency. Interacts with CLN5 and PPT1. Interacts with S100A1; this interaction increases F1-ATPase activity. Interacts with MTLN. Interacts with TTC5/STRAP; the interaction results in decreased mitochondrial ATP production.

The protein localises to the mitochondrion inner membrane. The catalysed reaction is ATP + H2O + 4 H(+)(in) = ADP + phosphate + 5 H(+)(out). Functionally, catalytic subunit beta, of the mitochondrial membrane ATP synthase complex (F(1)F(0) ATP synthase or Complex V) that produces ATP from ADP in the presence of a proton gradient across the membrane which is generated by electron transport complexes of the respiratory chain. ATP synthase complex consist of a soluble F(1) head domain - the catalytic core - and a membrane F(1) domain - the membrane proton channel. These two domains are linked by a central stalk rotating inside the F(1) region and a stationary peripheral stalk. During catalysis, ATP synthesis in the catalytic domain of F(1) is coupled via a rotary mechanism of the central stalk subunits to proton translocation. In vivo, can only synthesize ATP although its ATP hydrolase activity can be activated artificially in vitro. With the subunit alpha (ATP5F1A), forms the catalytic core in the F(1) domain. This chain is ATP synthase F(1) complex catalytic subunit beta, mitochondrial, found in Bos taurus (Bovine).